Reading from the N-terminus, the 258-residue chain is Imidazole glycerol phosphate synthase subunit HisF (258 aa).

Active-site residues include Asp-11 and Asp-130.

This sequence belongs to the HisA/HisF family. In terms of assembly, heterodimer of HisH and HisF.

It localises to the cytoplasm. It catalyses the reaction 5-[(5-phospho-1-deoxy-D-ribulos-1-ylimino)methylamino]-1-(5-phospho-beta-D-ribosyl)imidazole-4-carboxamide + L-glutamine = D-erythro-1-(imidazol-4-yl)glycerol 3-phosphate + 5-amino-1-(5-phospho-beta-D-ribosyl)imidazole-4-carboxamide + L-glutamate + H(+). It participates in amino-acid biosynthesis; L-histidine biosynthesis; L-histidine from 5-phospho-alpha-D-ribose 1-diphosphate: step 5/9. Its function is as follows. IGPS catalyzes the conversion of PRFAR and glutamine to IGP, AICAR and glutamate. The HisF subunit catalyzes the cyclization activity that produces IGP and AICAR from PRFAR using the ammonia provided by the HisH subunit. In Edwardsiella ictaluri (strain 93-146), this protein is Imidazole glycerol phosphate synthase subunit HisF.